We begin with the raw amino-acid sequence, 1252 residues long: LRR receptor-like serine/threonine-protein kinase GSO2 (1252 aa).

The N-terminal stretch at 1-22 (MQQNSVLLALFFLCFSSGLGSG) is a signal peptide. The Extracellular portion of the chain corresponds to 23–876 (QPGQRDDLQT…QRSLSPKTVV (854 aa)). N-linked (GlcNAc...) asparagine glycosylation is found at Asn-62, Asn-77, and Asn-117. LRR repeat units follow at residues 94 to 118 (FNNL…LSNL), 120 to 143 (SSLE…LGSL), 144 to 166 (VNLK…TFGN), 168 to 190 (VNLQ…RFGR), 191 to 215 (LVQL…IGNC), 217 to 239 (SLAL…LNRL), 240 to 263 (KNLQ…LGDL), 265 to 286 (SIQY…RLTE), 287 to 310 (LANL…EFWR), and 312 to 335 (NQLE…ICSN). Asn-157 carries N-linked (GlcNAc...) asparagine glycosylation. N-linked (GlcNAc...) asparagine glycosylation is found at Asn-214 and Asn-229. Asn-299 carries an N-linked (GlcNAc...) asparagine glycan. N-linked (GlcNAc...) asparagine glycosylation is present at Asn-336. LRR repeat units follow at residues 337-360 (TSLK…ISNC), 361-384 (QSLK…LFQL), 386-408 (ELTN…ISNL), 409-433 (TNLQ…GFLG), 435-456 (LEIM…IGNC), 457-480 (TRLQ…IGRL), 481-504 (KDLT…LGNC), 506-528 (QMTV…FGFL), 529-552 (TALE…LINL), 554-575 (NLTR…LCGS), 577-599 (SYLS…LGKS), 600-622 (TNLD…TFGK), 623-648 (ISEL…GLCK), 650-670 (LTHI…WLGK), 671-695 (LPLL…IFSL), 697-719 (NILT…IGNL), 720-743 (QALN…IGKL), 745-767 (KLFE…IGQL), 768-792 (QDLQ…ISTL), 793-816 (PKLE…IGDM), and 818-839 (SLGY…QFSR). Residues Asn-370, Asn-394, and Asn-407 are each glycosylated (N-linked (GlcNAc...) asparagine). A glycan (N-linked (GlcNAc...) asparagine) is linked at Asn-455. 4 N-linked (GlcNAc...) asparagine glycosylation sites follow: Asn-538, Asn-554, Asn-559, and Asn-566. Asn-709 carries N-linked (GlcNAc...) asparagine glycosylation. The N-linked (GlcNAc...) asparagine glycan is linked to Asn-780. Asn-823 carries an N-linked (GlcNAc...) asparagine glycan. Residues 877–897 (IISAISSLAAIALMVLVIILF) form a helical membrane-spanning segment. At 898-1252 (FKQNHDLFKK…YREMQTDTDK (355 aa)) the chain is on the cytoplasmic side. Thr-945 is modified (phosphothreonine). One can recognise a Protein kinase domain in the interval 948-1232 (LNEEFMIGSG…PSSRQASEYL (285 aa)). ATP is bound by residues 954-962 (IGSGGSGKV) and Lys-976. Phosphotyrosine occurs at positions 1024 and 1066. The active-site Proton acceptor is Asp-1079. Ser-1114 carries the post-translational modification Phosphoserine. Residues Tyr-1124 and Tyr-1131 each carry the phosphotyrosine modification.

Belongs to the protein kinase superfamily. Ser/Thr protein kinase family. Interacts with CIF1 and CIF2. Mostly expressed in siliques, seeds, developing embryos and seedlings, detected in flower buds, but not in roots, leaves or stems.

The protein localises to the cell membrane. It catalyses the reaction L-seryl-[protein] + ATP = O-phospho-L-seryl-[protein] + ADP + H(+). It carries out the reaction L-threonyl-[protein] + ATP = O-phospho-L-threonyl-[protein] + ADP + H(+). Together with GSO1, receptor-like serine/threonine-kinase required during the development of the epidermal surface in embryos and cotyledons. Involved in the nuclear division phase of megagametogenesis. In coordination with GSO2, regulates root growth through control of cell division and cell fate specification. Controls seedling root growth by modulating sucrose response after germination. Receptor of the peptide hormones CIF1 and CIF2 required for contiguous Casparian strip diffusion barrier formation in roots. This chain is LRR receptor-like serine/threonine-protein kinase GSO2, found in Arabidopsis thaliana (Mouse-ear cress).